The chain runs to 379 residues: Cinnamyl alcohol dehydrogenase 7 (379 aa).

Residues 1–13 are compositionally biased toward low complexity; it reads MAPTTTATAAAEQ. Residues 1–21 form a disordered region; it reads MAPTTTATAAAEQAPPPQHTR. Residue Cys-60 participates in Zn(2+) binding. An NADP(+)-binding site is contributed by Ser-62. The Zn(2+) site is built by His-82, Glu-83, Cys-113, Cys-116, Cys-119, Cys-127, and Cys-185. NADP(+)-binding positions include Thr-189, 210-215, 233-238, Thr-273, Gly-297, and 320-322; these read GLGGLG, STSPVK, and SCM.

The protein belongs to the zinc-containing alcohol dehydrogenase family. In terms of assembly, homodimer. Zn(2+) serves as cofactor. In terms of tissue distribution, expressed in roots, first internodes and panicles. Expressed in the vascular bundles and sclerenchyma cells below the epidermis in leaves and stems.

It catalyses the reaction (E)-cinnamyl alcohol + NADP(+) = (E)-cinnamaldehyde + NADPH + H(+). The catalysed reaction is (E)-coniferol + NADP(+) = (E)-coniferaldehyde + NADPH + H(+). It carries out the reaction (E)-sinapyl alcohol + NADP(+) = (E)-sinapaldehyde + NADPH + H(+). The enzyme catalyses (E)-4-coumaroyl alcohol + NADP(+) = (E)-4-coumaraldehyde + NADPH + H(+). It catalyses the reaction (E)-caffeyl alcohol + NADP(+) = (E)-caffeyl aldehyde + NADPH + H(+). Its pathway is aromatic compound metabolism; phenylpropanoid biosynthesis. Involved in lignin biosynthesis. May catalyze the final step specific for the production of lignin monomers, like coniferyl alcohol, sinapyl alcohol and 4-coumaryl alcohol. This chain is Cinnamyl alcohol dehydrogenase 7, found in Oryza sativa subsp. japonica (Rice).